The chain runs to 129 residues: Lysozyme C (129 aa).

One can recognise a C-type lysozyme domain in the interval 1–129; it reads KVYGRCELAA…VHAWIRGCRL (129 aa). 4 cysteine pairs are disulfide-bonded: Cys-6-Cys-127, Cys-30-Cys-115, Cys-64-Cys-80, and Cys-76-Cys-94. Catalysis depends on residues Glu-35 and Asp-52.

It belongs to the glycosyl hydrolase 22 family. As to quaternary structure, monomer.

Its subcellular location is the secreted. It catalyses the reaction Hydrolysis of (1-&gt;4)-beta-linkages between N-acetylmuramic acid and N-acetyl-D-glucosamine residues in a peptidoglycan and between N-acetyl-D-glucosamine residues in chitodextrins.. Lysozymes have primarily a bacteriolytic function; those in tissues and body fluids are associated with the monocyte-macrophage system and enhance the activity of immunoagents. The chain is Lysozyme C (LYZ) from Lophophorus impejanus (Himalayan monal pheasant).